Here is a 301-residue protein sequence, read N- to C-terminus: tRNA dimethylallyltransferase (301 aa).

9–16 provides a ligand contact to ATP; it reads GPTASGKS. Position 11 to 16 (11 to 16) interacts with substrate; sequence TASGKS. Residues 34-37 form an interaction with substrate tRNA region; the sequence is DSMQ.

The protein belongs to the IPP transferase family. Monomer. Mg(2+) is required as a cofactor.

The catalysed reaction is adenosine(37) in tRNA + dimethylallyl diphosphate = N(6)-dimethylallyladenosine(37) in tRNA + diphosphate. Catalyzes the transfer of a dimethylallyl group onto the adenine at position 37 in tRNAs that read codons beginning with uridine, leading to the formation of N6-(dimethylallyl)adenosine (i(6)A). This chain is tRNA dimethylallyltransferase, found in Corynebacterium glutamicum (strain R).